Consider the following 346-residue polypeptide: DNA primase small subunit PriS (346 aa).

Catalysis depends on residues Asp-97, Asp-99, and Asp-280.

The protein belongs to the eukaryotic-type primase small subunit family. In terms of assembly, heterodimer of a small subunit (PriS) and a large subunit (PriL). Requires Mg(2+) as cofactor. It depends on Mn(2+) as a cofactor.

Functionally, catalytic subunit of DNA primase, an RNA polymerase that catalyzes the synthesis of short RNA molecules used as primers for DNA polymerase during DNA replication. The small subunit contains the primase catalytic core and has DNA synthesis activity on its own. Binding to the large subunit stabilizes and modulates the activity, increasing the rate of DNA synthesis while decreasing the length of the DNA fragments, and conferring RNA synthesis capability. The DNA polymerase activity may enable DNA primase to also catalyze primer extension after primer synthesis. May also play a role in DNA repair. The chain is DNA primase small subunit PriS from Thermococcus kodakarensis (strain ATCC BAA-918 / JCM 12380 / KOD1) (Pyrococcus kodakaraensis (strain KOD1)).